Here is a 1416-residue protein sequence, read N- to C-terminus: DNA-directed RNA polymerase subunit beta' (1416 aa).

Zn(2+)-binding residues include C71, C73, C86, and C89. 3 residues coordinate Mg(2+): D461, D463, and D465. Zn(2+) contacts are provided by C815, C889, C896, and C899.

The protein belongs to the RNA polymerase beta' chain family. In terms of assembly, the RNAP catalytic core consists of 2 alpha, 1 beta, 1 beta' and 1 omega subunit. When a sigma factor is associated with the core the holoenzyme is formed, which can initiate transcription. Requires Mg(2+) as cofactor. Zn(2+) serves as cofactor.

It carries out the reaction RNA(n) + a ribonucleoside 5'-triphosphate = RNA(n+1) + diphosphate. Its function is as follows. DNA-dependent RNA polymerase catalyzes the transcription of DNA into RNA using the four ribonucleoside triphosphates as substrates. The chain is DNA-directed RNA polymerase subunit beta' from Haemophilus influenzae (strain PittEE).